Reading from the N-terminus, the 121-residue chain is Protein yippee-like 5 (121 aa).

The 98-residue stretch at 13 to 110 (RLFSCANCDT…LERALVRESE (98 aa)) folds into the Yippee domain. Positions 17, 20, 73, and 76 each coordinate Zn(2+). Phosphoserine is present on serine 118.

This sequence belongs to the yippee family. In terms of assembly, identified in the CTLH complex that contains GID4, RANBP9 and/or RANBP10, MKLN1, MAEA, RMND5A (or alternatively its paralog RMND5B), GID8, ARMC8, WDR26 and YPEL5. Within this complex, MAEA, RMND5A (or alternatively its paralog RMND5B), GID8, WDR26, and RANBP9 and/or RANBP10 form the catalytic core, while GID4, MKLN1, ARMC8 and YPEL5 have ancillary roles. Interacts with RANBP9 and RANBP10.

It is found in the nucleus. The protein localises to the cytoplasm. Its subcellular location is the cytoskeleton. It localises to the microtubule organizing center. The protein resides in the centrosome. It is found in the spindle pole. The protein localises to the midbody. Component of the CTLH E3 ubiquitin-protein ligase complex that selectively accepts ubiquitin from UBE2H and mediates ubiquitination and subsequent proteasomal degradation of the transcription factor HBP1. Required for normal cell proliferation. The sequence is that of Protein yippee-like 5 (YPEL5) from Bos taurus (Bovine).